Reading from the N-terminus, the 763-residue chain is Long-chain-fatty-acid--CoA ligase ACSBG2 (763 aa).

The disordered stretch occupies residues 47 to 78 (CSMKPADDPKTERSQMNKTGLASSSRPASNVW). Residues 51–61 (PADDPKTERSQ) are compositionally biased toward basic and acidic residues. Residues 62 to 78 (MNKTGLASSSRPASNVW) show a composition bias toward polar residues. Residues 281 to 289 (TSGTTGQPK), 472 to 477 (ELYGMS), Asp550, Arg565, and Lys678 contribute to the ATP site.

Belongs to the ATP-dependent AMP-binding enzyme family. Bubblegum subfamily.

The protein resides in the cytoplasm. The catalysed reaction is a long-chain fatty acid + ATP + CoA = a long-chain fatty acyl-CoA + AMP + diphosphate. It carries out the reaction (5Z,8Z,11Z,14Z)-eicosatetraenoate + ATP + CoA = (5Z,8Z,11Z,14Z)-eicosatetraenoyl-CoA + AMP + diphosphate. The enzyme catalyses hexadecanoate + ATP + CoA = hexadecanoyl-CoA + AMP + diphosphate. It catalyses the reaction (9Z)-octadecenoate + ATP + CoA = (9Z)-octadecenoyl-CoA + AMP + diphosphate. The catalysed reaction is (9Z,12Z)-octadecadienoate + ATP + CoA = (9Z,12Z)-octadecadienoyl-CoA + AMP + diphosphate. It carries out the reaction tetracosanoate + ATP + CoA = tetracosanoyl-CoA + AMP + diphosphate. Its function is as follows. Mediates activation of long-chain fatty acids for both synthesis of cellular lipids, and degradation via beta-oxidation. Catalyzes the conversion of fatty acids such as long chain and very long-chain fatty acids to their active form acyl-CoAs for both synthesis of cellular lipids, and degradation via beta-oxidation. Can activate diverse saturated, monosaturated and polyunsaturated fatty acids. This Gallus gallus (Chicken) protein is Long-chain-fatty-acid--CoA ligase ACSBG2.